Consider the following 62-residue polypeptide: Disintegrin schistatin-like subunit A (62 aa).

The 62-residue stretch at Ser1–Asn62 folds into the Disintegrin domain. Disulfide bonds link Cys5–Cys28, Cys19–Cys25, Cys24–Cys49, and Cys37–Cys56. The short motif at Arg41–Asp43 is the Cell attachment site element.

The protein belongs to the disintegrin family. Dimeric disintegrin subfamily. As to quaternary structure, heterodimer with subunit B; disulfide-linked. Expressed by the venom gland.

The protein localises to the secreted. Functionally, may bind to both alpha-IIb/beta-3 (ITGA2B/ITGB3) and alpha-V/beta-3 (ITGAV/ITGB3) integrins, and may inhibit platelet aggregation. The chain is Disintegrin schistatin-like subunit A from Echis carinatus (Saw-scaled viper).